Reading from the N-terminus, the 173-residue chain is Protein tyrosine phosphatase type IVA 3 (173 aa).

The Tyrosine-protein phosphatase domain occupies 8 to 161 (APVEVSYRHM…YRPKQRLRFK (154 aa)). C49 and C104 form a disulfide bridge. The Proton donor role is filled by D72. The Phosphocysteine intermediate role is filled by C104. Residue R110 participates in substrate binding. Residue C170 is modified to Cysteine methyl ester. A lipid anchor (S-farnesyl cysteine) is attached at C170. A propeptide spans 171-173 (CVM) (removed in mature form).

Belongs to the protein-tyrosine phosphatase family. Interacts with tubulin. In terms of processing, farnesylated. Farnesylation is required for membrane targeting. Unfarnesylated forms are shifted into the nucleus. Present in the small intestine, where it is located in the differentiated epithelial cells of the villus but not in the proliferating crypt cells (at protein level). Expressed in heart and skeletal muscle, and at lower levels in lung, spleen and testis.

The protein localises to the cell membrane. The protein resides in the early endosome. The catalysed reaction is O-phospho-L-tyrosyl-[protein] + H2O = L-tyrosyl-[protein] + phosphate. Inhibited by sodium orthovanadate and peroxovanadium compounds, and by pentamidine. Protein tyrosine phosphatase which stimulates progression from G1 into S phase during mitosis. Enhances cell proliferation, cell motility and invasive activity, and promotes cancer metastasis. May be involved in the progression of cardiac hypertrophy by inhibiting intracellular calcium mobilization in response to angiotensin II. This chain is Protein tyrosine phosphatase type IVA 3 (Ptp4a3), found in Mus musculus (Mouse).